The following is a 61-amino-acid chain: Large ribosomal subunit protein bL32 (61 aa).

Over residues 1 to 16 (MAVPKKKTSKSRKNMR) the composition is skewed to basic residues. A disordered region spans residues 1–20 (MAVPKKKTSKSRKNMRRAHD).

Belongs to the bacterial ribosomal protein bL32 family.

This Trichlorobacter lovleyi (strain ATCC BAA-1151 / DSM 17278 / SZ) (Geobacter lovleyi) protein is Large ribosomal subunit protein bL32.